Consider the following 90-residue polypeptide: Neurotoxin LmNaTx19 (90 aa).

A signal peptide spans 1–19 (MNHLILIVAMCLMVIGVQC). In terms of domain architecture, LCN-type CS-alpha/beta spans 21-80 (KDGYLYDDVDCKFSCWDNEYCRKLCKSKKAVGGYCWRWRFSCYCTGLPDNEKTEGTYKCG). 4 cysteine pairs are disulfide-bonded: cysteine 31–cysteine 79, cysteine 35–cysteine 55, cysteine 41–cysteine 62, and cysteine 45–cysteine 64.

This sequence belongs to the long (4 C-C) scorpion toxin superfamily. Sodium channel inhibitor family. Alpha subfamily. In terms of tissue distribution, expressed by the venom gland.

The protein localises to the secreted. Its function is as follows. Binds voltage-independently at site-3 of voltage-gated sodium channels (Nav) and inhibits the inactivation of the activated channels, thereby blocking neuronal transmission. This Lychas mucronatus (Chinese swimming scorpion) protein is Neurotoxin LmNaTx19.